Reading from the N-terminus, the 1782-residue chain is Signal-induced proliferation-associated 1-like protein 1 (1782 aa).

Disordered regions lie at residues 1 to 28, 47 to 125, and 140 to 171; these read MTSL…GAPK, GSSV…VSLN, and KNKT…RRIR. The span at 84–94 shows a compositional bias: basic and acidic residues; sequence PPRKENVKESS. The span at 95–125 shows a compositional bias: low complexity; it reads RSSQEIETSSCLESLSSKGSPVSQGSSVSLN. 6 positions are modified to phosphoserine: S162, S187, S193, S208, S255, and S288. The disordered stretch occupies residues 277–297; the sequence is EREKPLKRRSKSETGDSSIFR. In terms of domain architecture, Rap-GAP spans 599–816; that stretch reads LMKLDEQGLN…RTRQEYLKDL (218 aa). Residues 953-1031 enclose the PDZ domain; that stretch reads EMTLRRNGLG…VVIIPPHDDC (79 aa). Disordered stretches follow at residues 1069–1128 and 1144–1213; these read QRNA…RLSP and SQCR…SLAD. 7 positions are modified to phosphoserine: S1078, S1087, S1116, S1127, S1149, S1170, and S1181. The span at 1080-1093 shows a compositional bias: polar residues; it reads QVPSQLQSPMTSRL. Positions 1149–1159 are enriched in low complexity; sequence SPSNLSSSSET. The segment covering 1186-1205 has biased composition (polar residues); that stretch reads DRQNTQSDISGSGKSTPSWQ. 2 positions are modified to phosphoserine: S1234 and S1249. The interval 1247-1285 is disordered; it reads HLSPNKQGHSDSHYSSHSSSNTLSSNASSAHSDEKWYDG. Positions 1261–1276 are enriched in low complexity; the sequence is SSHSSSNTLSSNASSA. S1305 carries the post-translational modification Phosphoserine; by PLK2. Residues 1307 to 1342 are disordered; it reads IDTASYGPSHGSTASLGASTSSPRSGPGKEKVAPLW. A Phosphothreonine; by PLK2 modification is found at T1309. Residues 1315–1328 are compositionally biased toward low complexity; the sequence is SHGSTASLGASTSS. A Phosphoserine; by CDK5 modification is found at S1328. S1345 is modified (phosphoserine). The segment covering 1358 to 1368 has biased composition (basic and acidic residues); sequence TEGHGMDRKAE. The interval 1358 to 1454 is disordered; the sequence is TEGHGMDRKA…SSSGPRTFYP (97 aa). S1369, S1370, S1391, S1410, and S1412 each carry phosphoserine. Positions 1378 to 1410 are enriched in polar residues; the sequence is KSQGGSSPLSRENSTFSINDAASHTSTMSSRHS. Positions 1432 to 1447 are enriched in low complexity; that stretch reads SSQLAPSFSSSSSSSS. S1507 and S1528 each carry phosphoserine. T1530 is subject to Phosphothreonine. Residues S1533, S1544, S1547, S1564, and S1567 each carry the phosphoserine modification. R1580 is subject to Asymmetric dimethylarginine. A phosphoserine mark is found at S1582, S1624, S1626, S1629, S1687, S1690, S1707, S1708, and S1712. The tract at residues 1625-1647 is disordered; that stretch reads ASDSSLTDIQETRRQPIPDPGLM. Residues 1713–1773 adopt a coiled-coil conformation; it reads PTLASKVDQL…ASDKLKKFTE (61 aa).

Interacts with DLG4, PDLIM5, PDLIM7 and LZTS3. Interacts with the actin cytoskeleton. Interacts (via PDZ domain) with EPHA4 (via PDZ motif); controls neuronal morphology through regulation of the RAP1 (RAP1A or RAP1B) and RAP2 (RAP2A, RAP2B or RAP2C) GTPases. Ubiquitinated and degraded by the SCF(BTRC) following phosphorylation by PLK2. In terms of processing, phosphorylated at Ser-1328 by CDK5, creating a docking site for the POLO box domains of PLK2. Subsequently, PLK2 binds and phosphorylates SIPA1L1, leading to ubiquitination and degradation by the proteasome.

It localises to the cytoplasm. The protein resides in the cytoskeleton. Its subcellular location is the postsynaptic density. It is found in the synapse. The protein localises to the synaptosome. In terms of biological role, stimulates the GTPase activity of RAP2A. Promotes reorganization of the actin cytoskeleton and recruits DLG4 to F-actin. Contributes to the regulation of dendritic spine morphogenesis. In Mus musculus (Mouse), this protein is Signal-induced proliferation-associated 1-like protein 1 (Sipa1l1).